The chain runs to 134 residues: Putative pre-16S rRNA nuclease (134 aa).

The protein belongs to the YqgF nuclease family.

It is found in the cytoplasm. Its function is as follows. Could be a nuclease involved in processing of the 5'-end of pre-16S rRNA. The chain is Putative pre-16S rRNA nuclease from Helicobacter pylori (strain HPAG1).